Consider the following 175-residue polypeptide: Co-chaperone protein HscB homolog (175 aa).

The J domain maps to 7-79 (SHFDLFHLPA…LQRASYLLSL (73 aa)).

Belongs to the HscB family. In terms of assembly, interacts with HscA and stimulates its ATPase activity.

Its function is as follows. Co-chaperone involved in the maturation of iron-sulfur cluster-containing proteins. Seems to help targeting proteins to be folded toward HscA. This is Co-chaperone protein HscB homolog from Burkholderia vietnamiensis (strain G4 / LMG 22486) (Burkholderia cepacia (strain R1808)).